Here is a 111-residue protein sequence, read N- to C-terminus: Thiosulfate sulfurtransferase GlpE (111 aa).

In terms of domain architecture, Rhodanese spans 16-104; that stretch reads QTENAVLLDV…WQRAGLPMET (89 aa). The active-site Cysteine persulfide intermediate is cysteine 64.

Belongs to the GlpE family.

The protein localises to the cytoplasm. The enzyme catalyses thiosulfate + hydrogen cyanide = thiocyanate + sulfite + 2 H(+). It catalyses the reaction thiosulfate + [thioredoxin]-dithiol = [thioredoxin]-disulfide + hydrogen sulfide + sulfite + 2 H(+). In terms of biological role, transferase that catalyzes the transfer of sulfur from thiosulfate to thiophilic acceptors such as cyanide or dithiols. May function in a CysM-independent thiosulfate assimilation pathway by catalyzing the conversion of thiosulfate to sulfite, which can then be used for L-cysteine biosynthesis. This Actinobacillus succinogenes (strain ATCC 55618 / DSM 22257 / CCUG 43843 / 130Z) protein is Thiosulfate sulfurtransferase GlpE.